Reading from the N-terminus, the 95-residue chain is DNA-directed RNA polymerase subunit Rpo11 (95 aa).

This sequence belongs to the archaeal Rpo11/eukaryotic RPB11/RPC19 RNA polymerase subunit family. Part of the RNA polymerase complex.

Its subcellular location is the cytoplasm. The catalysed reaction is RNA(n) + a ribonucleoside 5'-triphosphate = RNA(n+1) + diphosphate. Its function is as follows. DNA-dependent RNA polymerase (RNAP) catalyzes the transcription of DNA into RNA using the four ribonucleoside triphosphates as substrates. This chain is DNA-directed RNA polymerase subunit Rpo11, found in Thermococcus onnurineus (strain NA1).